Here is a 438-residue protein sequence, read N- to C-terminus: 26S proteasome regulatory subunit 6A (438 aa).

Residues methionine 1–leucine 24 are disordered. Residues aspartate 11–glutamate 22 show a composition bias toward polar residues. An ATP-binding site is contributed by glycine 226 to threonine 233.

Belongs to the AAA ATPase family.

It localises to the cytoplasm. The protein localises to the nucleus. In terms of biological role, the 26S proteasome is involved in the ATP-dependent degradation of ubiquitinated proteins. The regulatory (or ATPase) complex confers ATP dependency and substrate specificity to the 26S complex. The polypeptide is 26S proteasome regulatory subunit 6A (tbp1) (Schizosaccharomyces pombe (strain 972 / ATCC 24843) (Fission yeast)).